We begin with the raw amino-acid sequence, 343 residues long: Ribosomal RNA small subunit methyltransferase C (343 aa).

Belongs to the methyltransferase superfamily. RsmC family. As to quaternary structure, monomer.

Its subcellular location is the cytoplasm. The enzyme catalyses guanosine(1207) in 16S rRNA + S-adenosyl-L-methionine = N(2)-methylguanosine(1207) in 16S rRNA + S-adenosyl-L-homocysteine + H(+). Functionally, specifically methylates the guanine in position 1207 of 16S rRNA in the 30S particle. This is Ribosomal RNA small subunit methyltransferase C from Escherichia coli (strain 55989 / EAEC).